The primary structure comprises 629 residues: tRNA uridine 5-carboxymethylaminomethyl modification enzyme MnmG (629 aa).

13–18 is a binding site for FAD; that stretch reads GGGHAG. 273–287 provides a ligand contact to NAD(+); sequence GPRYCPSIEDKVMRF.

The protein belongs to the MnmG family. Homodimer. Heterotetramer of two MnmE and two MnmG subunits. FAD is required as a cofactor.

It localises to the cytoplasm. In terms of biological role, NAD-binding protein involved in the addition of a carboxymethylaminomethyl (cmnm) group at the wobble position (U34) of certain tRNAs, forming tRNA-cmnm(5)s(2)U34. The protein is tRNA uridine 5-carboxymethylaminomethyl modification enzyme MnmG of Photorhabdus laumondii subsp. laumondii (strain DSM 15139 / CIP 105565 / TT01) (Photorhabdus luminescens subsp. laumondii).